Reading from the N-terminus, the 158-residue chain is Endoribonuclease YbeY (158 aa).

Zn(2+) contacts are provided by histidine 118, histidine 122, and histidine 128.

This sequence belongs to the endoribonuclease YbeY family. It depends on Zn(2+) as a cofactor.

The protein resides in the cytoplasm. Functionally, single strand-specific metallo-endoribonuclease involved in late-stage 70S ribosome quality control and in maturation of the 3' terminus of the 16S rRNA. The protein is Endoribonuclease YbeY of Bartonella quintana (strain Toulouse) (Rochalimaea quintana).